A 236-amino-acid polypeptide reads, in one-letter code: Methylosome subunit pICln (236 aa).

Ser2 carries the N-acetylserine modification. A phosphoserine mark is found at Ser95, Ser143, Ser192, Ser194, Ser197, and Ser209. The interval 134-158 (LHPDPEDEDSDDYDGEEYDVEAHEQ) is disordered. A compositionally biased stretch (acidic residues) spans 138–152 (PEDEDSDDYDGEEYD). Thr222 carries the phosphothreonine modification.

The protein belongs to the pICln (TC 1.A.47) family. As to quaternary structure, component of the methylosome, a 20S complex containing at least PRMT5/SKB1, WDR77/MEP50 and CLNS1A/pICln. May mediate SNRPD1 and SNRPD3 methylation. Forms a 6S pICln-Sm complex composed of CLNS1A/pICln, SNRPD1, SNRPD2, SNRPE, SNRPF and SNRPG; ring-like structure where CLNS1A/pICln mimics additional Sm proteins and which is unable to assemble into the core snRNP. Interacts with LSM10 and LSM11. Expressed in most tissues.

It localises to the cytoplasm. The protein resides in the cytosol. Its subcellular location is the nucleus. The protein localises to the cytoskeleton. Functionally, involved in both the assembly of spliceosomal snRNPs and the methylation of Sm proteins. Chaperone that regulates the assembly of spliceosomal U1, U2, U4 and U5 small nuclear ribonucleoproteins (snRNPs), the building blocks of the spliceosome, and thereby plays an important role in the splicing of cellular pre-mRNAs. Most spliceosomal snRNPs contain a common set of Sm proteins SNRPB, SNRPD1, SNRPD2, SNRPD3, SNRPE, SNRPF and SNRPG that assemble in a heptameric protein ring on the Sm site of the small nuclear RNA to form the core snRNP (Sm core). In the cytosol, the Sm proteins SNRPD1, SNRPD2, SNRPE, SNRPF and SNRPG are trapped in an inactive 6S pICln-Sm complex by the chaperone CLNS1A that controls the assembly of the core snRNP. Dissociation by the SMN complex of CLNS1A from the trapped Sm proteins and their transfer to an SMN-Sm complex triggers the assembly of core snRNPs and their transport to the nucleus. In Rattus norvegicus (Rat), this protein is Methylosome subunit pICln (Clns1a).